Consider the following 251-residue polypeptide: 3-deoxy-manno-octulosonate cytidylyltransferase (251 aa).

It belongs to the KdsB family.

It is found in the cytoplasm. The enzyme catalyses 3-deoxy-alpha-D-manno-oct-2-ulosonate + CTP = CMP-3-deoxy-beta-D-manno-octulosonate + diphosphate. Its pathway is nucleotide-sugar biosynthesis; CMP-3-deoxy-D-manno-octulosonate biosynthesis; CMP-3-deoxy-D-manno-octulosonate from 3-deoxy-D-manno-octulosonate and CTP: step 1/1. The protein operates within bacterial outer membrane biogenesis; lipopolysaccharide biosynthesis. Functionally, activates KDO (a required 8-carbon sugar) for incorporation into bacterial lipopolysaccharide in Gram-negative bacteria. The protein is 3-deoxy-manno-octulosonate cytidylyltransferase of Chlorobium luteolum (strain DSM 273 / BCRC 81028 / 2530) (Pelodictyon luteolum).